A 492-amino-acid polypeptide reads, in one-letter code: Glycerol kinase 1 (492 aa).

Thr-10 provides a ligand contact to ADP. ATP is bound by residues Thr-10 and Ser-11. Thr-10 is a sn-glycerol 3-phosphate binding site. Lys-14 lines the ADP pocket. Residues Arg-80, Glu-81, Tyr-132, and Asp-241 each contribute to the sn-glycerol 3-phosphate site. Glycerol-binding residues include Arg-80, Glu-81, Tyr-132, and Asp-241. The ADP site is built by Thr-263, Gly-306, Gly-407, and Asn-411. ATP contacts are provided by Thr-263, Gly-306, and Gly-407.

This sequence belongs to the FGGY kinase family.

It carries out the reaction glycerol + ATP = sn-glycerol 3-phosphate + ADP + H(+). It participates in polyol metabolism; glycerol degradation via glycerol kinase pathway; sn-glycerol 3-phosphate from glycerol: step 1/1. Its activity is regulated as follows. Inhibited by fructose 1,6-bisphosphate (FBP). Its function is as follows. Key enzyme in the regulation of glycerol uptake and metabolism. Catalyzes the phosphorylation of glycerol to yield sn-glycerol 3-phosphate. The sequence is that of Glycerol kinase 1 from Thermotoga maritima (strain ATCC 43589 / DSM 3109 / JCM 10099 / NBRC 100826 / MSB8).